Here is a 391-residue protein sequence, read N- to C-terminus: Mycofactocin maturase MftC (391 aa).

The 217-residue stretch at 16–232 folds into the Radical SAM core domain; that stretch reads LDAPICLTWE…KGERVLTGDS (217 aa). Residues Cys-30, Cys-34, Cys-37, Cys-251, Cys-258, Cys-269, Cys-310, Cys-313, Cys-319, Cys-323, and Cys-341 each coordinate [4Fe-4S] cluster. Residues 340–391 form a disordered region; sequence ECVQGHSEPALARERHLPRPRADHSRGRRVSKPVPLTLSMRPPKRPCNESPV. Positions 350–364 are enriched in basic and acidic residues; sequence LARERHLPRPRADHS.

The protein belongs to the radical SAM superfamily. Requires [4Fe-4S] cluster as cofactor.

It catalyses the reaction [mycofactocin precursor peptide]-C-terminal glycyl-L-valyl-L-tyrosine + S-adenosyl-L-methionine = [mycofactocin precursor peptide]-C-terminal glycyl-N-{[2-(4-hydroxyphenyl)ethenyl]-3-methylbutanamide} + 5'-deoxyadenosine + L-methionine + CO2. It carries out the reaction [mycofactocin precursor peptide]-C-terminal glycyl-N-{[2-(4-hydroxyphenyl)ethenyl]-3-methylbutanamide} + AH2 + S-adenosyl-L-methionine = [mycofactocin precursor peptide]-C-terminal glycyl-N-{5-[(4-hydroxyphenyl)methyl]-4,4-dimethyl-2-oxopyrrolidin-3-yl}acetamide + 5'-deoxyadenosine + L-methionine + A + H(+). Radical S-adenosylmethionine (SAM) enzyme responsible for the first step of the biosynthesis of the enzyme cofactor mycofactocin (MFT). Catalyzes two reactions at the C-terminus of the mycofactocin precursor (the MftA peptide). The first one is the oxidative decarboxylation of the C-terminal L-tyrosine of MftA, forming an unsaturated tyramine moiety. The second reaction is the cross-linking of the tyramine with the penultimate L-valine residue, forming a five-membered lactam ring. Its activity requires the presence of the MftB chaperone. In Mycobacterium tuberculosis (strain CDC 1551 / Oshkosh), this protein is Mycofactocin maturase MftC (mftC).